Consider the following 203-residue polypeptide: Nucleoside triphosphate pyrophosphatase (203 aa).

The Proton acceptor role is filled by aspartate 77.

This sequence belongs to the Maf family. A divalent metal cation is required as a cofactor.

It is found in the cytoplasm. The catalysed reaction is a ribonucleoside 5'-triphosphate + H2O = a ribonucleoside 5'-phosphate + diphosphate + H(+). It carries out the reaction a 2'-deoxyribonucleoside 5'-triphosphate + H2O = a 2'-deoxyribonucleoside 5'-phosphate + diphosphate + H(+). In terms of biological role, nucleoside triphosphate pyrophosphatase. May have a dual role in cell division arrest and in preventing the incorporation of modified nucleotides into cellular nucleic acids. In Rickettsia felis (strain ATCC VR-1525 / URRWXCal2) (Rickettsia azadi), this protein is Nucleoside triphosphate pyrophosphatase.